We begin with the raw amino-acid sequence, 286 residues long: uncharacterized protein (286 aa).

Positions 26 to 268 constitute an AB hydrolase-1 domain; sequence PLIILCHGFC…DACHYDIYEG (243 aa).

To E.coli YcjY.

This is an uncharacterized protein from Escherichia coli.